The chain runs to 140 residues: Large ribosomal subunit protein uL14x/uL14z/uL14y (140 aa).

This sequence belongs to the universal ribosomal protein uL14 family.

The sequence is that of Large ribosomal subunit protein uL14x/uL14z/uL14y (RPL23A) from Arabidopsis thaliana (Mouse-ear cress).